The sequence spans 471 residues: ATP synthase subunit beta (471 aa).

ATP is bound at residue 157–164 (GGAGVGKT).

This sequence belongs to the ATPase alpha/beta chains family. F-type ATPases have 2 components, CF(1) - the catalytic core - and CF(0) - the membrane proton channel. CF(1) has five subunits: alpha(3), beta(3), gamma(1), delta(1), epsilon(1). CF(0) has three main subunits: a(1), b(2) and c(9-12). The alpha and beta chains form an alternating ring which encloses part of the gamma chain. CF(1) is attached to CF(0) by a central stalk formed by the gamma and epsilon chains, while a peripheral stalk is formed by the delta and b chains.

It localises to the cell inner membrane. The catalysed reaction is ATP + H2O + 4 H(+)(in) = ADP + phosphate + 5 H(+)(out). Its function is as follows. Produces ATP from ADP in the presence of a proton gradient across the membrane. The catalytic sites are hosted primarily by the beta subunits. The sequence is that of ATP synthase subunit beta from Trichlorobacter lovleyi (strain ATCC BAA-1151 / DSM 17278 / SZ) (Geobacter lovleyi).